A 612-amino-acid polypeptide reads, in one-letter code: UvrABC system protein C (612 aa).

The GIY-YIG domain occupies T20–I98. Positions S208–L243 constitute a UVR domain.

Belongs to the UvrC family. In terms of assembly, interacts with UvrB in an incision complex.

The protein localises to the cytoplasm. Its function is as follows. The UvrABC repair system catalyzes the recognition and processing of DNA lesions. UvrC both incises the 5' and 3' sides of the lesion. The N-terminal half is responsible for the 3' incision and the C-terminal half is responsible for the 5' incision. The chain is UvrABC system protein C from Francisella tularensis subsp. holarctica (strain FTNF002-00 / FTA).